The following is a 77-amino-acid chain: MNIMITKQFDRHLKYYTTIVKVFANGIILITAYYLVFELPVGYLIGLYIIMFVVWLLVSMFFLGRLLDFMAKMDLKK.

Helical transmembrane passes span 22 to 42 and 44 to 64; these read VFAN…LPVG and LIGL…FFLG.

Its subcellular location is the cell membrane. This is an uncharacterized protein from Methanocaldococcus jannaschii (strain ATCC 43067 / DSM 2661 / JAL-1 / JCM 10045 / NBRC 100440) (Methanococcus jannaschii).